Here is a 727-residue protein sequence, read N- to C-terminus: Sodium-dependent neutral amino acid transporter SLC6A17 (727 aa).

At 1-68 (MPKNSKVTQR…DRPAWNSKLQ (68 aa)) the chain is on the cytoplasmic side. A phosphoserine mark is found at Ser-13 and Ser-20. The helical transmembrane segment at 69–89 (YILAQIGFSVGLGNIWRFPYL) threads the bilayer. At 90 to 96 (CQKNGGG) the chain is on the extracellular side. The helical transmembrane segment at 97-116 (AYLVPYLVLLIIIGIPLFFL) threads the bilayer. The Cytoplasmic portion of the chain corresponds to 117 to 140 (ELAVGQRIRRGSIGVWHYVCPRLG). The chain crosses the membrane as a helical span at residues 141 to 161 (GIGFSSCIVCLFVGLYYNVII). The Extracellular segment spans residues 162-224 (GWSVFYFFKS…NSISESGGLN (63 aa)). The N-linked (GlcNAc...) asparagine glycan is linked to Asn-186. A helical membrane pass occupies residues 225–243 (WKMTVCLLVAWSIVGMAVV). Residues 244–251 (KGIQSSGK) lie on the Cytoplasmic side of the membrane. Residues 252–269 (VMYFSSLFPYVVLACFLV) form a helical membrane-spanning segment. The Extracellular portion of the chain corresponds to 270 to 304 (RGLLLRGAVDGILHMFTPKLDKMLDPQVWREAATQ). The chain crosses the membrane as a helical span at residues 305 to 322 (VFFALGLGFGGVIAFSSY). At 323–333 (NKQDNNCHFDA) the chain is on the cytoplasmic side. The chain crosses the membrane as a helical span at residues 334-355 (ALVSFINFFTSVLATLVVFAVL). The Extracellular segment spans residues 356–451 (GFKANIMNEK…FIAFTEAMTH (96 aa)). Tyr-377 is subject to Phosphotyrosine. The N-linked (GlcNAc...) asparagine glycan is linked to Asn-393. The helical transmembrane segment at 452–471 (FPASPFWSVMFFLMLINLGL) threads the bilayer. Residues 472 to 494 (GSMIGTMAGITTPIIDTFKVPKE) are Cytoplasmic-facing. Residues 495–513 (MFTVGCCVFAFFVGLLFVQ) traverse the membrane as a helical segment. Topologically, residues 514–528 (RSGNYFVTMFDDYSA) are extracellular. The helical transmembrane segment at 529–549 (TLPLTVIVILENIAVAWIYGT) threads the bilayer. Topologically, residues 550–569 (KKFMQELTEMLGFRPYRFYF) are cytoplasmic. Residues 570–591 (YMWKFVSPLCMAVLTTASIIQL) traverse the membrane as a helical segment. Residues 592-618 (GVSPPGYSAWIKEEAAERYLYFPNWAM) lie on the Extracellular side of the membrane. Residues 619–641 (ALLITLIAVATLPIPVVFILRHF) form a helical membrane-spanning segment. Residues 642 to 727 (HLLSDGSNTL…LLASTPESEL (86 aa)) are Cytoplasmic-facing. Phosphoserine occurs at positions 665 and 701. The disordered stretch occupies residues 680 to 727 (VPSEAPSPMPTHRSYLGPGSTSPLESSSHPNGRYGSGYLLASTPESEL). Residues 698–709 (GSTSPLESSSHP) show a composition bias toward polar residues.

It belongs to the sodium:neurotransmitter symporter (SNF) (TC 2.A.22) family. Found exclusively in the central nervous system and is more abundant in the cerebellum and the cerebral cortex. Expressed in PC-12 cell line.

The protein localises to the cytoplasmic vesicle. It is found in the secretory vesicle. It localises to the synaptic vesicle membrane. The protein resides in the postsynapse. Its subcellular location is the presynapse. The catalysed reaction is L-proline(in) + Na(+)(in) = L-proline(out) + Na(+)(out). It carries out the reaction L-leucine(in) + Na(+)(in) = L-leucine(out) + Na(+)(out). The enzyme catalyses glycine(in) + Na(+)(in) = glycine(out) + Na(+)(out). It catalyses the reaction L-alanine(in) + Na(+)(in) = L-alanine(out) + Na(+)(out). The catalysed reaction is L-glutamine(in) + Na(+)(in) = L-glutamine(out) + Na(+)(out). Functionally, synaptic vesicle transporter with apparent selectivity for neutral amino acids. The transport is sodium-coupled but chloride-independent, likely driven by the proton electrochemical gradient generated by vacuolar H(+)-ATPase in an overall electrogenic mechanism. May contribute to the synaptic uptake of neurotransmitter precursors in a process coupled in part to vesicle exocytosis. The polypeptide is Sodium-dependent neutral amino acid transporter SLC6A17 (Rattus norvegicus (Rat)).